Reading from the N-terminus, the 356-residue chain is Tyrosine recombinase XerS (356 aa).

In terms of domain architecture, Core-binding (CB) spans 16-121; it reads IMPWYVLDYY…ALSSLYKYLT (106 aa). Residues 169-354 form the Tyr recombinase domain; that stretch reads AFLDYVDKEY…VNDEQKNALD (186 aa). Residues R210, K234, H306, R309, and H332 contribute to the active site. The active-site O-(3'-phospho-DNA)-tyrosine intermediate is the Y341.

It belongs to the 'phage' integrase family. XerS subfamily.

The protein resides in the cytoplasm. With respect to regulation, ftsK is required for recombination. Its function is as follows. Site-specific tyrosine recombinase, which acts by catalyzing the cutting and rejoining of the recombining DNA molecules. Essential to convert dimers of the bacterial chromosome into monomers to permit their segregation at cell division. This Streptococcus pyogenes serotype M5 (strain Manfredo) protein is Tyrosine recombinase XerS.